A 120-amino-acid polypeptide reads, in one-letter code: Ribonuclease P protein component (120 aa).

It belongs to the RnpA family. In terms of assembly, consists of a catalytic RNA component (M1 or rnpB) and a protein subunit.

It carries out the reaction Endonucleolytic cleavage of RNA, removing 5'-extranucleotides from tRNA precursor.. Its function is as follows. RNaseP catalyzes the removal of the 5'-leader sequence from pre-tRNA to produce the mature 5'-terminus. It can also cleave other RNA substrates such as 4.5S RNA. The protein component plays an auxiliary but essential role in vivo by binding to the 5'-leader sequence and broadening the substrate specificity of the ribozyme. In Chelativorans sp. (strain BNC1), this protein is Ribonuclease P protein component.